Here is a 115-residue protein sequence, read N- to C-terminus: UPF0102 protein SYO3AOP1_0546 (115 aa).

Belongs to the UPF0102 family.

The chain is UPF0102 protein SYO3AOP1_0546 from Sulfurihydrogenibium sp. (strain YO3AOP1).